The primary structure comprises 93 residues: Integration host factor subunit beta (93 aa).

It belongs to the bacterial histone-like protein family. Heterodimer of an alpha and a beta chain.

In terms of biological role, this protein is one of the two subunits of integration host factor, a specific DNA-binding protein that functions in genetic recombination as well as in transcriptional and translational control. The chain is Integration host factor subunit beta from Cereibacter sphaeroides (strain KD131 / KCTC 12085) (Rhodobacter sphaeroides).